The chain runs to 249 residues: 5'-nucleotidase SurE (249 aa).

The a divalent metal cation site is built by D8, D9, S39, and N91.

This sequence belongs to the SurE nucleotidase family. A divalent metal cation serves as cofactor.

The protein resides in the cytoplasm. It catalyses the reaction a ribonucleoside 5'-phosphate + H2O = a ribonucleoside + phosphate. Its function is as follows. Nucleotidase that shows phosphatase activity on nucleoside 5'-monophosphates. The sequence is that of 5'-nucleotidase SurE from Haemophilus influenzae (strain PittGG).